Reading from the N-terminus, the 443-residue chain is Phosphoglucosamine mutase (443 aa).

S102 functions as the Phosphoserine intermediate in the catalytic mechanism. Mg(2+) contacts are provided by S102, D241, D243, and D245. S102 is subject to Phosphoserine.

It belongs to the phosphohexose mutase family. Mg(2+) is required as a cofactor. Post-translationally, activated by phosphorylation.

It catalyses the reaction alpha-D-glucosamine 1-phosphate = D-glucosamine 6-phosphate. In terms of biological role, catalyzes the conversion of glucosamine-6-phosphate to glucosamine-1-phosphate. The protein is Phosphoglucosamine mutase of Acinetobacter baylyi (strain ATCC 33305 / BD413 / ADP1).